A 536-amino-acid polypeptide reads, in one-letter code: Phosphoenolpyruvate carboxykinase (ATP) (536 aa).

Positions 62, 203, and 209 each coordinate substrate. Residues Lys209, His228, and 244–252 (GLSGTGKTT) each bind ATP. The Mn(2+) site is built by Lys209 and His228. Asp265 contacts Mn(2+). Residues Glu293, Arg329, 445–446 (RI), and Thr451 each bind ATP. Residue Arg329 coordinates substrate.

It belongs to the phosphoenolpyruvate carboxykinase (ATP) family. Monomer. Requires Mn(2+) as cofactor.

It is found in the cytoplasm. The enzyme catalyses oxaloacetate + ATP = phosphoenolpyruvate + ADP + CO2. It participates in carbohydrate biosynthesis; gluconeogenesis. Involved in the gluconeogenesis. Catalyzes the conversion of oxaloacetate (OAA) to phosphoenolpyruvate (PEP) through direct phosphoryl transfer between the nucleoside triphosphate and OAA. This is Phosphoenolpyruvate carboxykinase (ATP) from Glaesserella parasuis serovar 5 (strain SH0165) (Haemophilus parasuis).